Here is a 338-residue protein sequence, read N- to C-terminus: Ketol-acid reductoisomerase (NADP(+)) (338 aa).

The KARI N-terminal Rossmann domain maps to 1–181 (MKVFYDKDCD…GGGRTGIIET (181 aa)). Residues 24–27 (YGSQ), R47, S50, T52, and 82–85 (DEFQ) contribute to the NADP(+) site. Residue H107 is part of the active site. Residue G133 participates in NADP(+) binding. One can recognise a KARI C-terminal knotted domain in the interval 182–327 (TFKDETETDL…EKLRSMMPWI (146 aa)). The Mg(2+) site is built by D190, E194, E226, and E230. S251 contributes to the substrate binding site.

The protein belongs to the ketol-acid reductoisomerase family. Requires Mg(2+) as cofactor.

The catalysed reaction is (2R)-2,3-dihydroxy-3-methylbutanoate + NADP(+) = (2S)-2-acetolactate + NADPH + H(+). It catalyses the reaction (2R,3R)-2,3-dihydroxy-3-methylpentanoate + NADP(+) = (S)-2-ethyl-2-hydroxy-3-oxobutanoate + NADPH + H(+). It participates in amino-acid biosynthesis; L-isoleucine biosynthesis; L-isoleucine from 2-oxobutanoate: step 2/4. It functions in the pathway amino-acid biosynthesis; L-valine biosynthesis; L-valine from pyruvate: step 2/4. In terms of biological role, involved in the biosynthesis of branched-chain amino acids (BCAA). Catalyzes an alkyl-migration followed by a ketol-acid reduction of (S)-2-acetolactate (S2AL) to yield (R)-2,3-dihydroxy-isovalerate. In the isomerase reaction, S2AL is rearranged via a Mg-dependent methyl migration to produce 3-hydroxy-3-methyl-2-ketobutyrate (HMKB). In the reductase reaction, this 2-ketoacid undergoes a metal-dependent reduction by NADPH to yield (R)-2,3-dihydroxy-isovalerate. This chain is Ketol-acid reductoisomerase (NADP(+)), found in Pseudomonas syringae pv. tomato (strain ATCC BAA-871 / DC3000).